The sequence spans 582 residues: V-type ATP synthase alpha chain (582 aa).

231 to 238 (GPFGSGKT) contributes to the ATP binding site.

It belongs to the ATPase alpha/beta chains family.

It carries out the reaction ATP + H2O + 4 H(+)(in) = ADP + phosphate + 5 H(+)(out). Produces ATP from ADP in the presence of a proton gradient across the membrane. The V-type alpha chain is a catalytic subunit. The sequence is that of V-type ATP synthase alpha chain from Deinococcus deserti (strain DSM 17065 / CIP 109153 / LMG 22923 / VCD115).